The primary structure comprises 97 residues: Apolipoprotein C-II (97 aa).

A signal peptide spans 1–22; it reads MGSRFFLALFLALLVLGNEVQG. Positions 63–71 are lipid binding; that stretch reads SVDEKLRDM. A lipoprotein lipase cofactor region spans residues 75 to 97; the sequence is SSAAMTTYAGIFTDQLLTLLKGE.

It belongs to the apolipoprotein C2 family. In terms of processing, proapolipoprotein C-II is synthesized as a sialic acid containing glycoprotein which is subsequently desialylated prior to its proteolytic processing. Post-translationally, proapolipoprotein C-II, the major form found in plasma undergoes proteolytic cleavage of its N-terminal hexapeptide to generate the mature form apolipoprotein C-II, which occurs as the minor form in plasma.

It is found in the secreted. In terms of biological role, component of chylomicrons, very low-density lipoproteins (VLDL), low-density lipoproteins (LDL), and high-density lipoproteins (HDL) in plasma. Plays an important role in lipoprotein metabolism as an activator of lipoprotein lipase. This chain is Apolipoprotein C-II (Apoc2), found in Rattus norvegicus (Rat).